The primary structure comprises 334 residues: MGKDFYKILGLERKASDDEIKKAYRKLALKYHPDKNKSPQAEERFKEIAEAYEVLSDKKKRDIFDNYGEDGLKGGQPGPDGGGQPGAYTYQFHGDPRATFAQFFGSSDPFGAFFTGGDNMFSGGQGGNTNEIFWNIGGDDMFAFNAQAPSRKRQQDPPIEHDLFVSLEEVDKGCIKKMKISRMATGSNGPYKEEKVLRITVKPGWKAGTKITFPQEGDSAPNKTPADIVFIIRDKPHSLFKREGIDLKYTAQISLKQALCGALVSVPTLQGSRIQVNPNHEIIKPTTTRRINGLGLPVPKEPSRRGDLIVSFDIKFPDTLAPSLQNQLSELLPN.

A J domain is found at 4–68 (DFYKILGLER…KKRDIFDNYG (65 aa)). Serine 187 is modified (phosphoserine).

Its subcellular location is the cytoplasm. This chain is DnaJ protein homolog 1 (DnaJ-1), found in Drosophila melanogaster (Fruit fly).